We begin with the raw amino-acid sequence, 492 residues long: 3-octaprenyl-4-hydroxybenzoate carboxy-lyase (492 aa).

Asparagine 177 contributes to the Mn(2+) binding site. Residues 180–182 (IYR), 194–196 (RWL), and 199–200 (RG) each bind prenylated FMN. Glutamate 243 provides a ligand contact to Mn(2+). Aspartate 292 (proton donor) is an active-site residue.

It belongs to the UbiD family. As to quaternary structure, homohexamer. The cofactor is prenylated FMN. Requires Mn(2+) as cofactor.

It localises to the cell membrane. It catalyses the reaction a 4-hydroxy-3-(all-trans-polyprenyl)benzoate + H(+) = a 2-(all-trans-polyprenyl)phenol + CO2. The protein operates within cofactor biosynthesis; ubiquinone biosynthesis. Catalyzes the decarboxylation of 3-octaprenyl-4-hydroxy benzoate to 2-octaprenylphenol, an intermediate step in ubiquinone biosynthesis. The protein is 3-octaprenyl-4-hydroxybenzoate carboxy-lyase of Neisseria meningitidis serogroup C / serotype 2a (strain ATCC 700532 / DSM 15464 / FAM18).